We begin with the raw amino-acid sequence, 762 residues long: 5-methyltetrahydropteroyltriglutamate--homocysteine methyltransferase (762 aa).

Residues 18 to 21 and K112 each bind 5-methyltetrahydropteroyltri-L-glutamate; that span reads REWK. L-homocysteine-binding positions include 435 to 437 and E488; that span reads IGS. Residues 435–437 and E488 each bind L-methionine; that span reads IGS. Residues 519–520 and W565 contribute to the 5-methyltetrahydropteroyltri-L-glutamate site; that span reads RC. D603 lines the L-homocysteine pocket. D603 contributes to the L-methionine binding site. E609 is a 5-methyltetrahydropteroyltri-L-glutamate binding site. Zn(2+) contacts are provided by H645, C647, and E669. The Proton donor role is filled by H698. C730 lines the Zn(2+) pocket.

This sequence belongs to the vitamin-B12 independent methionine synthase family. It depends on Zn(2+) as a cofactor.

The catalysed reaction is 5-methyltetrahydropteroyltri-L-glutamate + L-homocysteine = tetrahydropteroyltri-L-glutamate + L-methionine. The protein operates within amino-acid biosynthesis; L-methionine biosynthesis via de novo pathway; L-methionine from L-homocysteine (MetE route): step 1/1. Its function is as follows. Catalyzes the transfer of a methyl group from 5-methyltetrahydrofolate to homocysteine resulting in methionine formation. The chain is 5-methyltetrahydropteroyltriglutamate--homocysteine methyltransferase from Bacillus velezensis (strain DSM 23117 / BGSC 10A6 / LMG 26770 / FZB42) (Bacillus amyloliquefaciens subsp. plantarum).